A 226-amino-acid chain; its full sequence is UPF0758 protein SE_1336 (226 aa).

One can recognise an MPN domain in the interval 102–224 (QITHPSDVAS…FTSLVEAGYF (123 aa)). Zn(2+)-binding residues include His173, His175, and Asp186. The JAMM motif motif lies at 173 to 186 (HNHPSGDVTPSKED).

It belongs to the UPF0758 family.

This Staphylococcus epidermidis (strain ATCC 12228 / FDA PCI 1200) protein is UPF0758 protein SE_1336.